A 220-amino-acid polypeptide reads, in one-letter code: uncharacterized protein (220 aa).

The stretch at 165 to 202 (DKYEDLISDYNKIMEKYREVIKSEIEKYKALSKRKNDI) forms a coiled coil.

This is an uncharacterized protein from Pasteurella multocida (strain Pm70).